We begin with the raw amino-acid sequence, 374 residues long: Putative glutamate--cysteine ligase 2 (374 aa).

This sequence belongs to the glutamate--cysteine ligase type 2 family. YbdK subfamily.

The enzyme catalyses L-cysteine + L-glutamate + ATP = gamma-L-glutamyl-L-cysteine + ADP + phosphate + H(+). In terms of biological role, ATP-dependent carboxylate-amine ligase which exhibits weak glutamate--cysteine ligase activity. In Laribacter hongkongensis (strain HLHK9), this protein is Putative glutamate--cysteine ligase 2.